We begin with the raw amino-acid sequence, 201 residues long: Glycerol-3-phosphate acyltransferase (201 aa).

4 consecutive transmembrane segments (helical) span residues 4–24 (IASL…LVSL), 84–104 (EIAM…FLAF), 116–136 (VLLA…LAVA), and 157–177 (AWFI…LLLV).

The protein belongs to the PlsY family. Probably interacts with PlsX.

Its subcellular location is the cell inner membrane. It carries out the reaction an acyl phosphate + sn-glycerol 3-phosphate = a 1-acyl-sn-glycero-3-phosphate + phosphate. The protein operates within lipid metabolism; phospholipid metabolism. Catalyzes the transfer of an acyl group from acyl-phosphate (acyl-PO(4)) to glycerol-3-phosphate (G3P) to form lysophosphatidic acid (LPA). This enzyme utilizes acyl-phosphate as fatty acyl donor, but not acyl-CoA or acyl-ACP. This is Glycerol-3-phosphate acyltransferase from Laribacter hongkongensis (strain HLHK9).